The chain runs to 169 residues: uncharacterized protein (169 aa).

In terms of domain architecture, Nudix hydrolase spans 35–163; that stretch reads LIGRGTFILL…PYCPDSLQAL (129 aa). Residues 81-103 carry the Nudix box motif; sequence YADSAARELEEELGIRDAVLREH. Mg(2+)-binding residues include Glu88 and Glu92.

The protein belongs to the Nudix hydrolase family. It depends on Mg(2+) as a cofactor.

This is an uncharacterized protein from Pseudomonas aeruginosa (strain ATCC 15692 / DSM 22644 / CIP 104116 / JCM 14847 / LMG 12228 / 1C / PRS 101 / PAO1).